The primary structure comprises 37 residues: MKVRASVKKICEKCNVIRRRGRVMVICVNPKHKQRQG.

The protein belongs to the bacterial ribosomal protein bL36 family.

This is Large ribosomal subunit protein bL36 from Nostoc sp. (strain PCC 7120 / SAG 25.82 / UTEX 2576).